A 356-amino-acid polypeptide reads, in one-letter code: DNA polymerase IV (356 aa).

Positions 7 to 188 (IIHIDMDAFY…IPVTKFYGVG (182 aa)) constitute a UmuC domain. Mg(2+)-binding residues include aspartate 11 and aspartate 106. The active site involves glutamate 107.

It belongs to the DNA polymerase type-Y family. Monomer. Mg(2+) is required as a cofactor.

Its subcellular location is the cytoplasm. It catalyses the reaction DNA(n) + a 2'-deoxyribonucleoside 5'-triphosphate = DNA(n+1) + diphosphate. In terms of biological role, poorly processive, error-prone DNA polymerase involved in untargeted mutagenesis. Copies undamaged DNA at stalled replication forks, which arise in vivo from mismatched or misaligned primer ends. These misaligned primers can be extended by PolIV. Exhibits no 3'-5' exonuclease (proofreading) activity. May be involved in translesional synthesis, in conjunction with the beta clamp from PolIII. This Listeria monocytogenes serotype 4a (strain HCC23) protein is DNA polymerase IV.